Consider the following 189-residue polypeptide: uncharacterized protein (189 aa).

The region spanning 9–69 (ADTGGRILRA…SMLTSHIADV (61 aa)) is the HTH tetR-type domain. A DNA-binding region (H-T-H motif) is located at residues 32-51 (TLAEIARRAGVSRPTVYRRW).

This is an uncharacterized protein from Mycobacterium tuberculosis (strain CDC 1551 / Oshkosh).